The sequence spans 942 residues: DNA mismatch repair protein MSH2 (942 aa).

667–674 (GPNMGGKS) is a binding site for ATP.

Belongs to the DNA mismatch repair MutS family. Heterodimer of MSH2 and MSH6 (GTBP).

Its subcellular location is the nucleus. Functionally, involved in postreplication mismatch repair. Binds specifically to DNA containing mismatched nucleotides thus providing a target for the excision repair processes characteristic of postreplication mismatch repair. The protein is DNA mismatch repair protein MSH2 (MUS1) of Zea mays (Maize).